The following is a 484-amino-acid chain: Magnesium transporter MRS2-3 (484 aa).

2 disordered regions span residues 1–40 (MRGA…GRKK) and 141–186 (TKPQ…QSLE). The segment covering 10 to 24 (NFSTNPSTPNTGQPT) has biased composition (polar residues). A coiled-coil region spans residues 203–275 (ACLEAASSSL…LLDDDEDMAE (73 aa)). Residues 286–320 (LEDSSNSSMNESDTFEVDLPQGDEDDRLPPEFASE) are disordered. Acidic residues predominate over residues 298 to 311 (DTFEVDLPQGDEDD). A helical transmembrane segment spans residues 416 to 436 (GVMLTTATLVMSAFIAVAGVF). The Required for magnesium transport activity motif lies at 437 to 439 (GMN). The helical transmembrane segment at 455-475 (FIWTVIGGSIGSICLYVGAIG) threads the bilayer.

The protein belongs to the CorA metal ion transporter (MIT) (TC 1.A.35.5) family. Expressed in the whole plant.

It localises to the membrane. Functionally, magnesium transporter that may mediate the influx of magnesium. The polypeptide is Magnesium transporter MRS2-3 (MRS2-3) (Arabidopsis thaliana (Mouse-ear cress)).